A 358-amino-acid chain; its full sequence is CRS2-associated factor 2, mitochondrial (358 aa).

Residues 1–28 constitute a mitochondrion transit peptide; sequence MLSIRRSLTLAKEPKDLFLFLCNLRARC. Residues 35 to 64 are disordered; it reads DPPFSPLSKPTKPPKEKKKQKTKKQDQSSE. CRM domains are found at residues 141–239 and 261–357; these read ETLT…SRPI and DGLE…ELVT.

Part of large ribonucleo-protein complexes that include group IIB introns.

The protein localises to the mitochondrion. Functionally, may be involved in the splicing of group IIB introns in mitochondria. This chain is CRS2-associated factor 2, mitochondrial, found in Arabidopsis thaliana (Mouse-ear cress).